The sequence spans 452 residues: Pup--protein ligase (452 aa).

Residue E9 coordinates Mg(2+). R53 is an ATP binding site. Mg(2+) is bound at residue Y55. D57 serves as the catalytic Proton acceptor. Residue E63 coordinates Mg(2+). ATP-binding residues include T66 and W419.

This sequence belongs to the Pup ligase/Pup deamidase family. Pup-conjugating enzyme subfamily.

It carries out the reaction ATP + [prokaryotic ubiquitin-like protein]-L-glutamate + [protein]-L-lysine = ADP + phosphate + N(6)-([prokaryotic ubiquitin-like protein]-gamma-L-glutamyl)-[protein]-L-lysine.. The protein operates within protein degradation; proteasomal Pup-dependent pathway. It functions in the pathway protein modification; protein pupylation. Its function is as follows. Catalyzes the covalent attachment of the prokaryotic ubiquitin-like protein modifier Pup to the proteasomal substrate proteins, thereby targeting them for proteasomal degradation. This tagging system is termed pupylation. The ligation reaction involves the side-chain carboxylate of the C-terminal glutamate of Pup and the side-chain amino group of a substrate lysine. The sequence is that of Pup--protein ligase from Mycobacterium leprae (strain Br4923).